Reading from the N-terminus, the 293-residue chain is Ribonuclease HIII (293 aa).

The RNase H type-2 domain occupies 78–293 (LPLIGTDEVG…TEKAKKRLER (216 aa)). Residues D84, E85, and D187 each coordinate a divalent metal cation.

This sequence belongs to the RNase HII family. RnhC subfamily. It depends on Mn(2+) as a cofactor. Requires Mg(2+) as cofactor.

The protein resides in the cytoplasm. It carries out the reaction Endonucleolytic cleavage to 5'-phosphomonoester.. In terms of biological role, endonuclease that specifically degrades the RNA of RNA-DNA hybrids. This chain is Ribonuclease HIII, found in Streptococcus pneumoniae serotype 19F (strain G54).